Here is a 261-residue protein sequence, read N- to C-terminus: Enolase-phosphatase E1 (261 aa).

Residues Asp16 and Glu18 each coordinate Mg(2+). Substrate-binding positions include 150–151 (SS) and Lys184. Asp209 is a binding site for Mg(2+).

It belongs to the HAD-like hydrolase superfamily. MasA/MtnC family. In terms of assembly, monomer. It depends on Mg(2+) as a cofactor.

The protein resides in the cytoplasm. The protein localises to the nucleus. It catalyses the reaction 5-methylsulfanyl-2,3-dioxopentyl phosphate + H2O = 1,2-dihydroxy-5-(methylsulfanyl)pent-1-en-3-one + phosphate. Its pathway is amino-acid biosynthesis; L-methionine biosynthesis via salvage pathway; L-methionine from S-methyl-5-thio-alpha-D-ribose 1-phosphate: step 3/6. It functions in the pathway amino-acid biosynthesis; L-methionine biosynthesis via salvage pathway; L-methionine from S-methyl-5-thio-alpha-D-ribose 1-phosphate: step 4/6. In terms of biological role, bifunctional enzyme that catalyzes the enolization of 2,3-diketo-5-methylthiopentyl-1-phosphate (DK-MTP-1-P) into the intermediate 2-hydroxy-3-keto-5-methylthiopentenyl-1-phosphate (HK-MTPenyl-1-P), which is then dephosphorylated to form the acireductone 1,2-dihydroxy-3-keto-5-methylthiopentene (DHK-MTPene). This is Enolase-phosphatase E1 (Enoph1) from Rattus norvegicus (Rat).